Consider the following 181-residue polypeptide: DKIPNFVVPGKCASVDRNKLWAEQTPNRNSYAGVWYQFALTNNPYQLIEKCVRNEYSFDGKQFVIKSTGIAYDGNLLKRNGKLYPNPFGEPHLSIDYENSFAAPLVILETDYSNYACLYSCIDYNFGYHSDFSFIFSRSANLADQYVKKCEAAFKNINVDTTRFVKTVQGSSCPYDTQKTV.

3 disulfide bridges follow: C12/C121, C51/C173, and C117/C150.

This sequence belongs to the calycin superfamily. Lipocalin family. In terms of assembly, oligomer; Can form dimers (beta-crustacyanin); or complexes of 16 subunits (alpha-crustacyanin). There are five types of subunits: A1, A2, A3, C1 and C2. In terms of tissue distribution, found in the carapace.

The protein resides in the secreted. Its subcellular location is the extracellular space. Its function is as follows. Binds the carotenoid astaxanthin (AXT) which provides the blue coloration to the carapace of the lobster. This Homarus gammarus (European lobster) protein is Crustacyanin-A1 subunit.